Reading from the N-terminus, the 536-residue chain is Enterobactin synthase component E (536 aa).

The substrate site is built by Asn-235, Ser-240, Gly-309, Val-331, Ala-335, Asp-415, and Lys-432. The interval 438–439 (GG) is phosphopantetheine binding. Lys-441 contributes to the substrate binding site.

The protein belongs to the ATP-dependent AMP-binding enzyme family. EntE subfamily. Proteins EntB, EntD, EntE, and EntF form a multienzyme complex called enterobactin synthase. Monomer. EntA and EntE interact together.

The protein localises to the membrane. The catalysed reaction is 3 2,3-dihydroxybenzoate + 3 L-serine + 6 ATP = enterobactin + 6 AMP + 6 diphosphate + 4 H(+). It catalyses the reaction 2,3-dihydroxybenzoate + holo-[ACP] + ATP = 2,3-dihydroxybenzoyl-[ACP] + AMP + diphosphate. The enzyme catalyses 2,3-dihydroxybenzoyl-5'-AMP + holo-[ACP] = 2,3-dihydroxybenzoyl-[ACP] + AMP + H(+). Its pathway is siderophore biosynthesis; enterobactin biosynthesis. With respect to regulation, inhibited by the adenylate analogs, 5'-O-[N-(salicyl)sulfamoyl]adenosine (Sal-AMS) and 5'-O-[N-(2,3-dihydroxybenzoyl)sulfamoyl]adenosine (DHB-AMS). Adenylation of 2,3-dihydroxybenzoate (DHB) is enhanced by a protein-protein interaction between the EntA and EntE. Its function is as follows. Involved in the biosynthesis of the siderophore enterobactin (enterochelin), which is a macrocyclic trimeric lactone of N-(2,3-dihydroxybenzoyl)-serine. The serine trilactone serves as a scaffolding for the three catechol functionalities that provide hexadentate coordination for the tightly ligated iron(2+) atoms. EntE processes via a two-step adenylation-ligation reaction (bi-uni-uni-bi ping-pong mechanism). First, it catalyzes the activation of the carboxylate group of 2,3-dihydroxy-benzoate (DHB), via a reversible ATP-dependent pyrophosphate exchange reactions to yield the acyladenylate intermediate 2,3-dihydroxybenzoyl-AMP. It can also transfer AMP to salicylate, 2,4-dihydroxybenzoate, gentisate and 2,3,4-trihydroxybenzoate. In the second step, DHB is transferred from 2,3-dihydroxybenzoyl-AMP onto the phosphopantetheinylated EntB (holo-EntB) to form DHB-holo-EntB. Then this product will serve in the formation of the amide bond between 2,3-dihydroxybenzoate (DHB) and L-serine. It can also transfer adenylated salicylate to holo-EntB. The sequence is that of Enterobactin synthase component E from Escherichia coli (strain K12).